Here is a 670-residue protein sequence, read N- to C-terminus: DNA-binding transcriptional activator HyfR (670 aa).

In terms of domain architecture, GAF spans 169–311; sequence DLDDLIADVA…HIADRIAIAV (143 aa). The Cys-rich segment, might bind a metal cluster motif lies at 207 to 221; that stretch reads CSDLSASHCACLPRC. One can recognise a Sigma-54 factor interaction domain in the interval 347–576; it reads IIYQSQAMED…LENVIERAVL (230 aa). Residues 375–382 and 438–447 contribute to the ATP site; these read GETGTGKE and ADGGTLFLDE. A DNA-binding region (H-T-H motif) is located at residues 641-660; the sequence is PRGAATRLGMKRTTLLSRMQ.

A transcriptional activator of its own operon; when overexpressed operon expression is strongly enhanced by low pH (under pH 6.0), strongly inhibited by O(2) but only weakly stimulated by fumarate. Expression in situ is very weak. In Escherichia coli (strain K12), this protein is DNA-binding transcriptional activator HyfR.